The primary structure comprises 239 residues: 2-C-methyl-D-erythritol 4-phosphate cytidylyltransferase (239 aa).

The protein belongs to the IspD/TarI cytidylyltransferase family. IspD subfamily. Homodimer.

It carries out the reaction 2-C-methyl-D-erythritol 4-phosphate + CTP + H(+) = 4-CDP-2-C-methyl-D-erythritol + diphosphate. It participates in isoprenoid biosynthesis; isopentenyl diphosphate biosynthesis via DXP pathway; isopentenyl diphosphate from 1-deoxy-D-xylulose 5-phosphate: step 2/6. Catalyzes the formation of 4-diphosphocytidyl-2-C-methyl-D-erythritol from CTP and 2-C-methyl-D-erythritol 4-phosphate (MEP). The chain is 2-C-methyl-D-erythritol 4-phosphate cytidylyltransferase from Sodalis glossinidius (strain morsitans).